A 171-amino-acid polypeptide reads, in one-letter code: MSLFKSLVARSGSGIRAAQIARQNGPVISQISIISSQPFSTSPVSYKTNTSTRTKENVHDLETFFRLIGRNTVEHLDLFEGDLAKFLSTSSQQMKFMGIDVSTRRYMLRWKHKFENDLEPLREHKKGKKKNGGERNAKTVLAKKNALKKLEEKEKFAAEELDAENRGERLF.

The transit peptide at 1–23 (MSLFKSLVARSGSGIRAAQIARQ) directs the protein to the mitochondrion. Residues 122 to 141 (REHKKGKKKNGGERNAKTVL) form a disordered region.

It belongs to the mitochondrion-specific ribosomal protein mS41 family.

It is found in the mitochondrion. In terms of biological role, involved in telomere length regulation. The sequence is that of Small ribosomal subunit protein mS41 (FYV4) from Scheffersomyces stipitis (strain ATCC 58785 / CBS 6054 / NBRC 10063 / NRRL Y-11545) (Yeast).